We begin with the raw amino-acid sequence, 348 residues long: tRNA N6-adenosine threonylcarbamoyltransferase (348 aa).

2 residues coordinate Fe cation: histidine 116 and histidine 120. Substrate is bound by residues 138 to 142 (IISGG), aspartate 171, glycine 184, and asparagine 282. Aspartate 310 lines the Fe cation pocket.

Belongs to the KAE1 / TsaD family. It depends on Fe(2+) as a cofactor.

It is found in the cytoplasm. The catalysed reaction is L-threonylcarbamoyladenylate + adenosine(37) in tRNA = N(6)-L-threonylcarbamoyladenosine(37) in tRNA + AMP + H(+). Required for the formation of a threonylcarbamoyl group on adenosine at position 37 (t(6)A37) in tRNAs that read codons beginning with adenine. Is involved in the transfer of the threonylcarbamoyl moiety of threonylcarbamoyl-AMP (TC-AMP) to the N6 group of A37, together with TsaE and TsaB. TsaD likely plays a direct catalytic role in this reaction. This Ehrlichia ruminantium (strain Welgevonden) protein is tRNA N6-adenosine threonylcarbamoyltransferase.